The sequence spans 304 residues: MSTPDSTLVKAFLLDLQNRICNGLEALDGAAQFAEDSWKREEGGGGQSRVLTGGAVFEQAGVNFSHVMGASMPASATAHRPELAGRSFEAMGVSLVIHPKNPHIPTTHANVRFFIAHKEGADPVWWFGGGFDLTPYYPYLEDVVEWHQSAKSLCEPFGEEVYPKYKQWCDEYFWLPHRNETRGVGGLFFDDLNKQGFEQSFAFMQAVGNGFLTAYAPIVERRRDTEYGEHERQFQLYRRGRYVEFNLVYDRGTLFGLQTGGRTESILMSMPPLVRWEYAYTPEAGGPEAQLYSDYLKPRDWLNL.

S94 contributes to the substrate binding site. Residues H98 and H108 each contribute to the a divalent metal cation site. H108 acts as the Proton donor in catalysis. Position 110 to 112 (110 to 112) interacts with substrate; the sequence is NVR. The a divalent metal cation site is built by H147 and H177. An important for dimerization region spans residues 242-277; that stretch reads YVEFNLVYDRGTLFGLQTGGRTESILMSMPPLVRWE. Residue 260-262 participates in substrate binding; it reads GGR.

Belongs to the aerobic coproporphyrinogen-III oxidase family. In terms of assembly, homodimer. It depends on a divalent metal cation as a cofactor.

It localises to the cytoplasm. It catalyses the reaction coproporphyrinogen III + O2 + 2 H(+) = protoporphyrinogen IX + 2 CO2 + 2 H2O. It functions in the pathway porphyrin-containing compound metabolism; protoporphyrin-IX biosynthesis; protoporphyrinogen-IX from coproporphyrinogen-III (O2 route): step 1/1. Involved in the heme biosynthesis. Catalyzes the aerobic oxidative decarboxylation of propionate groups of rings A and B of coproporphyrinogen-III to yield the vinyl groups in protoporphyrinogen-IX. The chain is Oxygen-dependent coproporphyrinogen-III oxidase from Shewanella pealeana (strain ATCC 700345 / ANG-SQ1).